Reading from the N-terminus, the 65-residue chain is Large ribosomal subunit protein bL35 (65 aa).

Residues 1-26 are compositionally biased toward basic residues; sequence MPKIKTHRGAAKRFSKTGTGKIKRSH. The segment at 1–41 is disordered; the sequence is MPKIKTHRGAAKRFSKTGTGKIKRSHAFTSHILTSKTRKNK.

It belongs to the bacterial ribosomal protein bL35 family.

This Geotalea daltonii (strain DSM 22248 / JCM 15807 / FRC-32) (Geobacter daltonii) protein is Large ribosomal subunit protein bL35.